The sequence spans 204 residues: Large ribosomal subunit protein eL15 (204 aa).

Belongs to the eukaryotic ribosomal protein eL15 family. As to quaternary structure, component of the large ribosomal subunit.

The protein resides in the cytoplasm. Its function is as follows. Component of the large ribosomal subunit. The ribosome is a large ribonucleoprotein complex responsible for the synthesis of proteins in the cell. In Siniperca knerii (Big-eye mandarin fish), this protein is Large ribosomal subunit protein eL15 (rpl15).